A 1514-amino-acid polypeptide reads, in one-letter code: Neurexin-1 (1514 aa).

An N-terminal signal peptide occupies residues 1–30 (MGTALVQRGGCCLLCLSLLLLGCWAELGSG). In terms of domain architecture, Laminin G-like 1 spans 31-217 (LEFPGAEGQW…PPNSGGGSPC (187 aa)). The Extracellular portion of the chain corresponds to 31 to 1438 (LEFPGAEGQW…EVIRESSSTT (1408 aa)). Residues N125 and N190 are each glycosylated (N-linked (GlcNAc...) asparagine). Positions 197–221 (VDGGEVKLDDEPPNSGGGSPCEAGE) are disordered. Positions 219–256 (AGEEGEGGVCLNGGVCSVVDDQAVCDCSRTGFRGKDCS) constitute an EGF-like 1 domain. 2 cysteine pairs are disulfide-bonded: C228–C243 and C245–C255. 2 Laminin G-like domains span residues 283 to 480 (IATF…AFKC) and 487 to 679 (DPIT…KPSC). D329, L346, and M414 together coordinate Ca(2+). 5 disulfides stabilise this stretch: C444-C480, C650-C679, C687-C698, C692-C707, and C709-C719. Residues 683 to 720 (TAKPCLSNPCKNNGMCRDGWNRYVCDCSGTGYLGRSCE) enclose the EGF-like 2 domain. Laminin G-like domains lie at 725–898 (VLSY…IDYC) and 912–1087 (DPVT…ERGC). Ca(2+) is bound by residues D772 and L789. Residue N797 is glycosylated (N-linked (GlcNAc...) asparagine). Residue R848 coordinates Ca(2+). Disulfide bonds link C890-C898, C1059-C1087, C1094-C1105, C1099-C1114, and C1116-C1126. Positions 1090 to 1127 (PSTTCQEDSCSNQGVCLQQWDGFSCDCSMTSFSGPLCN) constitute an EGF-like 3 domain. One can recognise a Laminin G-like 6 domain in the interval 1133–1331 (YIFSKGGGQI…DANIAIVGNV (199 aa)). Ca(2+) is bound by residues D1183 and V1200. N1230 carries N-linked (GlcNAc...) asparagine glycosylation. Ca(2+)-binding residues include I1282 and N1284. An O-linked (Xyl...) (heparan sulfate) serine glycan is attached at S1392. Residues 1396–1427 (PSDDEDIDPCEPSSGGLANPTRVGGREPYPGS) are disordered. A helical membrane pass occupies residues 1439 to 1459 (GMVVGIVAAAALCILILLYAM). Topologically, residues 1460-1514 (YKYRNRDEGSYHVDESRNYISNSAQSNGAVVKEKQPSSAKSANKNKKNKDKEYYV) are cytoplasmic. An interaction with CASK region spans residues 1481–1507 (NSAQSNGAVVKEKQPSSAKSANKNKKN). Positions 1481 to 1514 (NSAQSNGAVVKEKQPSSAKSANKNKKNKDKEYYV) are disordered.

Belongs to the neurexin family. In terms of assembly, interacts (via laminin G-like domain 2 and/or laminin G-like domain 6) with NLGN1 forming a heterotetramer, where one NLGN1 dimer interacts with one NRXN1 dimer. Also interacts (via laminin G-like domain 2 and/or laminin G-like domain 6) with NLGN2, NLGN3 and NLGN4L; interactions with NLGN1, NLGN2, NLGN3 and NLGN4L are calcium-dependent. Interacts (via cytoplasmic C-terminal region) with CASK (via the PDZ, SH3 and guanylate kinase-like domains). Interacts (via cytoplasmic C-terminus) with CASKIN1 and APBA1. Interacts (via laminin G-like domain 2) with NXPH1 and NXPH3. Alpha-type isoforms (neurexin-1-alpha) interact (via laminin G-like domain 2 and/or laminin G-like domain 6) with DAG1 (via alpha-dystroglycan chain). Interacts with LRRTM1, LRRTM2, LRRTM3 and LRRTM4. Interacts with SYT13 and SYTL1. Interacts with CBLN1, CBLN2 and, less avidly, with CBLN4. Interacts with CLSTN3. In terms of processing, O-glycosylated; contains heparan sulfate. Heparan sulfate attachment is required for synapse development by mediating interactions with neuroligins and LRRTM2.

The protein resides in the presynaptic cell membrane. Functionally, cell surface protein involved in cell-cell-interactions, exocytosis of secretory granules and regulation of signal transmission. Function is isoform-specific. Alpha-type isoforms have a long N-terminus with six laminin G-like domains and play an important role in synaptic signal transmission. Alpha-type isoforms play a role in the regulation of calcium channel activity and Ca(2+)-triggered neurotransmitter release at synapses and at neuromuscular junctions. They play an important role in Ca(2+)-triggered exocytosis of secretory granules in pituitary gland. They may affect their functions at synapses and in endocrine cells via their interactions with proteins from the exocytotic machinery. Likewise, alpha-type isoforms play a role in regulating the activity of postsynaptic NMDA receptors, a subtype of glutamate-gated ion channels. Both alpha-type and beta-type isoforms may play a role in the formation or maintenance of synaptic junctions via their interactions (via the extracellular domains) with neuroligin family members, CBLN1 or CBLN2. In vitro, triggers the de novo formation of presynaptic structures. May be involved in specification of excitatory synapses. Alpha-type isoforms were first identified as receptors for alpha-latrotoxin from spider venom. This is Neurexin-1 (Nrxn1) from Mus musculus (Mouse).